The chain runs to 255 residues: Protein DOG1-like 2 (255 aa).

The DOG1 domain occupies 10–246 (EKLQKRCYHE…HDRGRVRADV (237 aa)).

The chain is Protein DOG1-like 2 from Arabidopsis thaliana (Mouse-ear cress).